The sequence spans 226 residues: Urease accessory protein UreF (226 aa).

Belongs to the UreF family. UreD, UreF and UreG form a complex that acts as a GTP-hydrolysis-dependent molecular chaperone, activating the urease apoprotein by helping to assemble the nickel containing metallocenter of UreC. The UreE protein probably delivers the nickel.

Its subcellular location is the cytoplasm. Functionally, required for maturation of urease via the functional incorporation of the urease nickel metallocenter. This is Urease accessory protein UreF from Burkholderia ambifaria (strain ATCC BAA-244 / DSM 16087 / CCUG 44356 / LMG 19182 / AMMD) (Burkholderia cepacia (strain AMMD)).